A 196-amino-acid chain; its full sequence is ATP-dependent Clp protease proteolytic subunit (196 aa).

S96 serves as the catalytic Nucleophile. H121 is a catalytic residue.

Belongs to the peptidase S14 family. Fourteen ClpP subunits assemble into 2 heptameric rings which stack back to back to give a disk-like structure with a central cavity, resembling the structure of eukaryotic proteasomes.

It is found in the cytoplasm. The enzyme catalyses Hydrolysis of proteins to small peptides in the presence of ATP and magnesium. alpha-casein is the usual test substrate. In the absence of ATP, only oligopeptides shorter than five residues are hydrolyzed (such as succinyl-Leu-Tyr-|-NHMec, and Leu-Tyr-Leu-|-Tyr-Trp, in which cleavage of the -Tyr-|-Leu- and -Tyr-|-Trp bonds also occurs).. Its function is as follows. Cleaves peptides in various proteins in a process that requires ATP hydrolysis. Has a chymotrypsin-like activity. Plays a major role in the degradation of misfolded proteins. The sequence is that of ATP-dependent Clp protease proteolytic subunit from Streptococcus mutans serotype c (strain ATCC 700610 / UA159).